The sequence spans 244 residues: Protein-lysine methyltransferase METTL21E (244 aa).

The interval methionine 1–aspartate 20 is disordered. A compositionally biased stretch (basic and acidic residues) spans threonine 9–arginine 18. S-adenosyl-L-methionine-binding positions include tryptophan 69, glycine 97–glycine 99, aspartate 118, tryptophan 149, and alanine 170.

The protein belongs to the methyltransferase superfamily. METTL21 family.

In terms of biological role, protein-lysine methyltransferase. In Mus musculus (Mouse), this protein is Protein-lysine methyltransferase METTL21E (Mettl21e).